The sequence spans 427 residues: Enolase (427 aa).

A (2R)-2-phosphoglycerate-binding site is contributed by Gln-163. The active-site Proton donor is Glu-205. The Mg(2+) site is built by Asp-242, Glu-287, and Asp-314. Residues Lys-339, Arg-368, Ser-369, and Lys-390 each contribute to the (2R)-2-phosphoglycerate site. The active-site Proton acceptor is Lys-339.

This sequence belongs to the enolase family. Mg(2+) is required as a cofactor.

It is found in the cytoplasm. The protein localises to the secreted. The protein resides in the cell surface. The catalysed reaction is (2R)-2-phosphoglycerate = phosphoenolpyruvate + H2O. It participates in carbohydrate degradation; glycolysis; pyruvate from D-glyceraldehyde 3-phosphate: step 4/5. Functionally, catalyzes the reversible conversion of 2-phosphoglycerate (2-PG) into phosphoenolpyruvate (PEP). It is essential for the degradation of carbohydrates via glycolysis. The polypeptide is Enolase (Solibacter usitatus (strain Ellin6076)).